We begin with the raw amino-acid sequence, 154 residues long: Lipoprotein signal peptidase (154 aa).

A run of 2 helical transmembrane segments spans residues 57–77 (LVLS…MIKY) and 86–103 (ISLS…YDRV). Residues Asp-110 and Asp-129 contribute to the active site. Residues 124 to 144 (VFNVADICVVVGTIMIAIFIV) form a helical membrane-spanning segment.

This sequence belongs to the peptidase A8 family.

The protein localises to the cell membrane. It catalyses the reaction Release of signal peptides from bacterial membrane prolipoproteins. Hydrolyzes -Xaa-Yaa-Zaa-|-(S,diacylglyceryl)Cys-, in which Xaa is hydrophobic (preferably Leu), and Yaa (Ala or Ser) and Zaa (Gly or Ala) have small, neutral side chains.. The protein operates within protein modification; lipoprotein biosynthesis (signal peptide cleavage). This protein specifically catalyzes the removal of signal peptides from prolipoproteins. In Clostridium acetobutylicum (strain ATCC 824 / DSM 792 / JCM 1419 / IAM 19013 / LMG 5710 / NBRC 13948 / NRRL B-527 / VKM B-1787 / 2291 / W), this protein is Lipoprotein signal peptidase.